We begin with the raw amino-acid sequence, 284 residues long: Formamidopyrimidine-DNA glycosylase (284 aa).

Pro-2 serves as the catalytic Schiff-base intermediate with DNA. The Proton donor role is filled by Glu-3. The active-site Proton donor; for beta-elimination activity is the Lys-58. DNA contacts are provided by His-97, Arg-120, and Arg-165. The FPG-type zinc-finger motif lies at 250 to 284 (FVYDRAGEPCKVCGTPVRQIVQGQRSTFYCTHCQH). Arg-274 (proton donor; for delta-elimination activity) is an active-site residue.

Belongs to the FPG family. Monomer. Zn(2+) serves as cofactor.

The catalysed reaction is Hydrolysis of DNA containing ring-opened 7-methylguanine residues, releasing 2,6-diamino-4-hydroxy-5-(N-methyl)formamidopyrimidine.. It catalyses the reaction 2'-deoxyribonucleotide-(2'-deoxyribose 5'-phosphate)-2'-deoxyribonucleotide-DNA = a 3'-end 2'-deoxyribonucleotide-(2,3-dehydro-2,3-deoxyribose 5'-phosphate)-DNA + a 5'-end 5'-phospho-2'-deoxyribonucleoside-DNA + H(+). Its function is as follows. Involved in base excision repair of DNA damaged by oxidation or by mutagenic agents. Acts as a DNA glycosylase that recognizes and removes damaged bases. Has a preference for oxidized purines, such as 7,8-dihydro-8-oxoguanine (8-oxoG). Has AP (apurinic/apyrimidinic) lyase activity and introduces nicks in the DNA strand. Cleaves the DNA backbone by beta-delta elimination to generate a single-strand break at the site of the removed base with both 3'- and 5'-phosphates. This Cupriavidus pinatubonensis (strain JMP 134 / LMG 1197) (Cupriavidus necator (strain JMP 134)) protein is Formamidopyrimidine-DNA glycosylase.